The following is a 194-amino-acid chain: RNA polymerase II subunit A C-terminal domain phosphatase SSU72 like protein 6 (194 aa).

Belongs to the SSU72 phosphatase family.

The protein localises to the nucleus. It carries out the reaction O-phospho-L-seryl-[protein] + H2O = L-seryl-[protein] + phosphate. The catalysed reaction is O-phospho-L-threonyl-[protein] + H2O = L-threonyl-[protein] + phosphate. In terms of biological role, protein phosphatase that catalyzes the dephosphorylation of the C-terminal domain of RNA polymerase II. Plays a role in RNA processing and termination. The protein is RNA polymerase II subunit A C-terminal domain phosphatase SSU72 like protein 6 of Homo sapiens (Human).